Reading from the N-terminus, the 260-residue chain is Proliferating cell nuclear antigen (260 aa).

Residues 61 to 80 (RCDRNLSMGMNLGSMAKILK) mediate DNA binding.

Belongs to the PCNA family. Homotrimer. Forms a complex with activator 1 heteropentamer in the presence of ATP. Interacts with E2f. Interacts with the catalytic subunits of two DNA polymerase complexes: PolD1 from the delta complex and PolE1/DNApol-epsilon255 from the epsilon complex. As to expression, expressed at high levels in adult ovary.

The protein resides in the nucleus. Its subcellular location is the chromosome. It localises to the cytoplasm. In terms of biological role, likely to be an auxiliary protein of DNA polymerase delta complex and is probably involved in the control of DNA replication and repair by increasing the polymerase's processibility. The sequence is that of Proliferating cell nuclear antigen from Drosophila melanogaster (Fruit fly).